Reading from the N-terminus, the 478-residue chain is Alpha-1,3-mannosyl-glycoprotein 4-beta-N-acetylglucosaminyltransferase C (478 aa).

The Cytoplasmic segment spans residues 1-23; that stretch reads MFKFHQVKHIFEILDKMRCLRKR. Residues 24-44 traverse the membrane as a helical; Signal-anchor for type II membrane protein segment; sequence FTVSFLGVLVIFLLFMNLYIE. The Lumenal segment spans residues 45-478; the sequence is DSYVLEGDKQ…IIRSISIWTS (434 aa). Residues Asn84, Asn215, and Asn348 are each glycosylated (N-linked (GlcNAc...) asparagine).

It belongs to the glycosyltransferase 54 family. Requires a divalent metal cation as cofactor.

Its subcellular location is the golgi apparatus membrane. The catalysed reaction is N(4)-{beta-D-GlcNAc-(1-&gt;2)-alpha-D-Man-(1-&gt;3)-[beta-D-GlcNAc-(1-&gt;2)-alpha-D-Man-(1-&gt;6)]-beta-D-Man-(1-&gt;4)-beta-D-GlcNAc-(1-&gt;4)-beta-D-GlcNAc}-L-asparaginyl-[protein] + UDP-N-acetyl-alpha-D-glucosamine = N(4)-{beta-D-GlcNAc-(1-&gt;2)-[beta-D-GlcNAc-(1-&gt;4)]-alpha-D-Man-(1-&gt;3)-[beta-D-GlcNAc-(1-&gt;2)-alpha-D-Man-(1-&gt;6)]-beta-D-Man-(1-&gt;4)-beta-D-GlcNAc-(1-&gt;4)-beta-D-GlcNAc}-L-asparaginyl-[protein] + UDP + H(+). It functions in the pathway protein modification; protein glycosylation. Glycosyltransferase that participates in the transfer of N-acetylglucosamine (GlcNAc) to the core mannose residues of N-linked glycans. Catalyzes the formation of the GlcNAcbeta1-4 branch on the GlcNAcbeta1-2Manalpha1-3 arm of the core structure of N-linked glycans. Essential for the production of tri- and tetra-antennary N-linked sugar chains. Does not catalyze the transfer of GlcNAc to the Manalpha1-6 arm to form GlcNAcBeta1-4Manalpha1-6 linkage ('GnT-VI' activity). This is Alpha-1,3-mannosyl-glycoprotein 4-beta-N-acetylglucosaminyltransferase C (MGAT4C) from Sus scrofa (Pig).